We begin with the raw amino-acid sequence, 548 residues long: Glucose-6-phosphate isomerase (548 aa).

Glu-359 acts as the Proton donor in catalysis. Catalysis depends on residues His-390 and Lys-510.

Belongs to the GPI family.

It is found in the cytoplasm. The enzyme catalyses alpha-D-glucose 6-phosphate = beta-D-fructose 6-phosphate. Its pathway is carbohydrate biosynthesis; gluconeogenesis. It functions in the pathway carbohydrate degradation; glycolysis; D-glyceraldehyde 3-phosphate and glycerone phosphate from D-glucose: step 2/4. In terms of biological role, catalyzes the reversible isomerization of glucose-6-phosphate to fructose-6-phosphate. The polypeptide is Glucose-6-phosphate isomerase (Gloeobacter violaceus (strain ATCC 29082 / PCC 7421)).